Reading from the N-terminus, the 81-residue chain is Photosystem I iron-sulfur center (81 aa).

2 consecutive 4Fe-4S ferredoxin-type domains span residues S2 to W31 and G37 to Y68. Residues C11, C14, C17, C21, C48, C51, C54, and C58 each coordinate [4Fe-4S] cluster.

As to quaternary structure, the cyanobacterial PSI reaction center is composed of one copy each of PsaA,B,C,D,E,F,I,J,K,L,M and X, and forms trimeric complexes. [4Fe-4S] cluster serves as cofactor.

The protein resides in the cellular thylakoid membrane. It carries out the reaction reduced [plastocyanin] + hnu + oxidized [2Fe-2S]-[ferredoxin] = oxidized [plastocyanin] + reduced [2Fe-2S]-[ferredoxin]. Its function is as follows. Apoprotein for the two 4Fe-4S centers FA and FB of photosystem I (PSI); essential for photochemical activity. FB is the terminal electron acceptor of PSI, donating electrons to ferredoxin. The C-terminus interacts with PsaA/B/D and helps assemble the protein into the PSI complex. Required for binding of PsaD and PsaE to PSI. PSI is a plastocyanin/cytochrome c6-ferredoxin oxidoreductase, converting photonic excitation into a charge separation, which transfers an electron from the donor P700 chlorophyll pair to the spectroscopically characterized acceptors A0, A1, FX, FA and FB in turn. This Prochlorococcus marinus subsp. pastoris (strain CCMP1986 / NIES-2087 / MED4) protein is Photosystem I iron-sulfur center.